Here is a 356-residue protein sequence, read N- to C-terminus: Phosphate acyltransferase (356 aa).

This sequence belongs to the PlsX family. In terms of assembly, homodimer. Probably interacts with PlsY.

The protein resides in the cytoplasm. The enzyme catalyses a fatty acyl-[ACP] + phosphate = an acyl phosphate + holo-[ACP]. Its pathway is lipid metabolism; phospholipid metabolism. In terms of biological role, catalyzes the reversible formation of acyl-phosphate (acyl-PO(4)) from acyl-[acyl-carrier-protein] (acyl-ACP). This enzyme utilizes acyl-ACP as fatty acyl donor, but not acyl-CoA. The sequence is that of Phosphate acyltransferase from Xanthobacter autotrophicus (strain ATCC BAA-1158 / Py2).